We begin with the raw amino-acid sequence, 270 residues long: Tryptophan synthase alpha chain (270 aa).

Residues E49 and D60 each act as proton acceptor in the active site.

The protein belongs to the TrpA family. In terms of assembly, tetramer of two alpha and two beta chains.

It catalyses the reaction (1S,2R)-1-C-(indol-3-yl)glycerol 3-phosphate + L-serine = D-glyceraldehyde 3-phosphate + L-tryptophan + H2O. Its pathway is amino-acid biosynthesis; L-tryptophan biosynthesis; L-tryptophan from chorismate: step 5/5. In terms of biological role, the alpha subunit is responsible for the aldol cleavage of indoleglycerol phosphate to indole and glyceraldehyde 3-phosphate. The protein is Tryptophan synthase alpha chain of Gluconobacter oxydans (strain 621H) (Gluconobacter suboxydans).